Consider the following 1901-residue polypeptide: Methylcytosine dioxygenase tet3 (1901 aa).

A CXXC-type zinc finger spans residues 58–99 (SNKKRKRCGVCVPCLRKEPCGACYNCVNRSTSHQICKMRKCE). Zn(2+)-binding residues include C65, C68, C71, C77, C80, C83, C93, and C98. Disordered regions lie at residues 434–455 (KNALPVPQSPRQTSWEQNKKSS), 602–658 (WWVP…EGSA), 751–787 (KDQCPTPSTHDTSSSSGQGDSANQHTNVSDVPGQNDL), and 808–867 (DFSL…PVSR). Polar residues-rich tracts occupy residues 442-455 (SPRQTSWEQNKKSS) and 602-614 (WWVPSSQQAPVSK). The segment covering 640 to 652 (KPQRKQVQIKKPK) has biased composition (basic residues). A compositionally biased stretch (low complexity) spans 758-771 (STHDTSSSSGQGDS). Polar residues predominate over residues 847 to 867 (ENSTKPATHSNPALSNNPVSR). Zn(2+)-binding residues include C957, C959, C1017, H1043, and C1045. A 2-oxoglutarate-binding site is contributed by R1085. Zn(2+) contacts are provided by C1095, C1097, C1113, C1122, and C1182. A 2-oxoglutarate-binding site is contributed by C1198. H1204 provides a ligand contact to Zn(2+). The Fe cation site is built by H1206 and D1208. H1240 is a binding site for 2-oxoglutarate. Disordered regions lie at residues 1282–1338 (SEPA…QQTK), 1457–1501 (YGSE…VETT), 1591–1624 (SNAPGLKDKQWPPYGTDVSVRQHDSLDSQSPGKV), and 1680–1745 (SATP…DEEI). Positions 1291-1325 (RQLEAKKAAAEKKKLQKEKLVSPDKTKQEPSDKKT) are enriched in basic and acidic residues. Over residues 1326–1338 (CQQNPGVPQQQTK) the composition is skewed to polar residues. The span at 1465-1474 (SFRRSSEVPH) shows a compositional bias: basic and acidic residues. Residues 1477–1487 (SLQNPSSQKSV) are compositionally biased toward polar residues. Composition is skewed to polar residues over residues 1680–1693 (SATPSDRSSITPCS) and 1702–1719 (SFPNPTVNSLKTDSSQNH). H1780 lines the Fe cation pocket. A 2-oxoglutarate-binding site is contributed by 1795 to 1797 (RIS).

Belongs to the TET family. The cofactor is Fe(2+). Zn(2+) serves as cofactor.

It localises to the nucleus. The protein resides in the chromosome. The catalysed reaction is a 5-methyl-2'-deoxycytidine in DNA + 2-oxoglutarate + O2 = a 5-hydroxymethyl-2'-deoxycytidine in DNA + succinate + CO2. The enzyme catalyses a 5-hydroxymethyl-2'-deoxycytidine in DNA + 2-oxoglutarate + O2 = a 5-formyl-2'-deoxycytidine in DNA + succinate + CO2 + H2O. It carries out the reaction a 5-formyl-2'-deoxycytidine in DNA + 2-oxoglutarate + O2 = a 5-carboxyl-2'-deoxycytidine in DNA + succinate + CO2 + H(+). Its function is as follows. Dioxygenase that catalyzes the conversion of the modified genomic base 5-methylcytosine (5mC) into 5-hydroxymethylcytosine (5hmC) and plays a key role in epigenetic chromatin reprogramming during embryonic development. Conversion of 5mC into 5hmC probably constitutes the first step in cytosine demethylation. Selectively binds to the promoter region of target genes and contributes to regulate the expression of numerous developmental genes, including pax6, rax, sox9 and six3. May also contribute to the regulation of target genes in ways that do not require its enzyme activity. The protein is Methylcytosine dioxygenase tet3 of Xenopus tropicalis (Western clawed frog).